Here is a 243-residue protein sequence, read N- to C-terminus: Voltage-gated monoatomic cation channel TMEM109 (243 aa).

Residues 1 to 33 form the signal peptide; the sequence is MAGAHSTPLWSRHLLKAVLMVLVALFLVHSASA. Residues 34 to 83 are Lumenal-facing; it reads QSHREFASPGQQKKETSADILTQIGRSLKEMLDTWLGPETMHVISETLLQ. Residues 84–104 traverse the membrane as a helical segment; that stretch reads VMWAISSAISVACFALSGIAA. At 105 to 135 the chain is on the cytoplasmic side; sequence QLLSALGLDGEQLTQGLKLSPSQVQTLLLWG. Residues 136-156 traverse the membrane as a helical segment; that stretch reads AAALVIYWLLSLLLGLVLALL. The Lumenal segment spans residues 157 to 185; that stretch reads GRILGGLKLVLFVAGFVALVRSVPDPSTR. The chain crosses the membrane as a helical span at residues 186-205; it reads ALMLLALLTLFALLSRLTGS. Topologically, residues 206–243 are cytoplasmic; it reads RSSGSHLEAKVRGLERQIEELRGRQRRAAKMPRSMEEE.

Homooligomer. Interacts with CRYAB; in the cellular response to DNA damage.

It is found in the nucleus outer membrane. It localises to the endoplasmic reticulum membrane. Its subcellular location is the sarcoplasmic reticulum membrane. The enzyme catalyses K(+)(in) = K(+)(out). The catalysed reaction is Ca(2+)(in) = Ca(2+)(out). Functions as a voltage-gated monoatomic cation channel permeable to both potassium and calcium. Plays a role in the cellular response to DNA damage. The protein is Voltage-gated monoatomic cation channel TMEM109 of Mus musculus (Mouse).